A 431-amino-acid polypeptide reads, in one-letter code: Serine hydroxymethyltransferase (431 aa).

(6S)-5,6,7,8-tetrahydrofolate-binding positions include Leu-127 and Gly-131–Leu-133. At Lys-236 the chain carries N6-(pyridoxal phosphate)lysine.

The protein belongs to the SHMT family. As to quaternary structure, homodimer. Pyridoxal 5'-phosphate is required as a cofactor.

Its subcellular location is the cytoplasm. It catalyses the reaction (6R)-5,10-methylene-5,6,7,8-tetrahydrofolate + glycine + H2O = (6S)-5,6,7,8-tetrahydrofolate + L-serine. It participates in one-carbon metabolism; tetrahydrofolate interconversion. Its pathway is amino-acid biosynthesis; glycine biosynthesis; glycine from L-serine: step 1/1. In terms of biological role, catalyzes the reversible interconversion of serine and glycine with tetrahydrofolate (THF) serving as the one-carbon carrier. This reaction serves as the major source of one-carbon groups required for the biosynthesis of purines, thymidylate, methionine, and other important biomolecules. Also exhibits THF-independent aldolase activity toward beta-hydroxyamino acids, producing glycine and aldehydes, via a retro-aldol mechanism. This Granulibacter bethesdensis (strain ATCC BAA-1260 / CGDNIH1) protein is Serine hydroxymethyltransferase.